The sequence spans 275 residues: Lycopene elongase/hydratase (275 aa).

Transmembrane regions (helical) follow at residues Phe-13 to Gly-33, Ala-38 to Ile-58, Ala-84 to Leu-104, Glu-107 to Leu-127, Val-134 to Val-154, Pro-160 to Ile-180, Ala-203 to Val-223, Phe-225 to Ala-245, and Tyr-253 to Val-273.

It belongs to the UbiA prenyltransferase family.

The protein localises to the cell membrane. The catalysed reaction is all-trans-lycopene + dimethylallyl diphosphate + H2O = dihydroisopentenyldehydrorhodopin + diphosphate. The enzyme catalyses isopentenyldehydrorhodopin + dimethylallyl diphosphate + H2O = dihydrobisanhydrobacterioruberin + diphosphate. Its pathway is carotenoid biosynthesis. Its activity is regulated as follows. Inhibited by bacterioopsin. In terms of biological role, involved in the biosynthesis of the acyclic C50 carotenoid bacterioruberin (BR). Acts as a bifunctional elongase/hydratase that catalyzes the elongation of lycopene by attaching a C(5) isoprene unit at C-2, as well as the hydroxylation of the previous end of the molecule. The enzyme acts at both ends of the substrate, and catalyzes the conversion of lycopene to the C(45) intermediate dihydroisopentenyldehydrorhodopin (DH-IDR) and the conversion of isopentenyldehydrorhodopin (IDR) to the C(50) carotenoid dihydrobisanhydrobacterioruberin (DH-BABR). Can also catalyze the conversion of lycopene to tetrahydrobisanhydrobacterioruberin (TH-BABR). This Halobacterium salinarum (strain ATCC 700922 / JCM 11081 / NRC-1) (Halobacterium halobium) protein is Lycopene elongase/hydratase.